A 102-amino-acid chain; its full sequence is Small ribosomal subunit protein uS10 (102 aa).

It belongs to the universal ribosomal protein uS10 family. As to quaternary structure, part of the 30S ribosomal subunit.

Functionally, involved in the binding of tRNA to the ribosomes. The polypeptide is Small ribosomal subunit protein uS10 (Caldanaerobacter subterraneus subsp. tengcongensis (strain DSM 15242 / JCM 11007 / NBRC 100824 / MB4) (Thermoanaerobacter tengcongensis)).